The primary structure comprises 539 residues: Hydroxylamine reductase (539 aa).

The [4Fe-4S] cluster site is built by Cys-3, Cys-6, Cys-13, and Cys-19. Hybrid [4Fe-2O-2S] cluster is bound by residues His-240, Glu-264, Cys-308, Cys-395, Cys-423, Cys-448, Glu-482, and Lys-484. Cys-395 carries the post-translational modification Cysteine persulfide.

The protein belongs to the HCP family. The cofactor is [4Fe-4S] cluster. It depends on hybrid [4Fe-2O-2S] cluster as a cofactor.

Its subcellular location is the cytoplasm. It catalyses the reaction A + NH4(+) + H2O = hydroxylamine + AH2 + H(+). Functionally, catalyzes the reduction of hydroxylamine to form NH(3) and H(2)O. The chain is Hydroxylamine reductase from Thermodesulfovibrio yellowstonii (strain ATCC 51303 / DSM 11347 / YP87).